Here is a 427-residue protein sequence, read N- to C-terminus: Tuberculostearic acid methyltransferase UfaA1 (427 aa).

It belongs to the CFA/CMAS family.

It functions in the pathway lipid metabolism; fatty acid biosynthesis. Its activity is regulated as follows. Inhibited by S-adenosyl-L-homocysteine. Involved in the biosynthesis of the tuberculostearic acid (10-methylstearic-acid or TSA), a constituent lipid of the mycobacterial cell wall. Catalyzes the transfer of the methyl group from S-adenosyl-L-methionine (SAM) to the double bond of oleic acid in phosphatidylethanolamine or phosphatidylcholine to produce TSA. The protein is Tuberculostearic acid methyltransferase UfaA1 of Mycobacterium tuberculosis (strain ATCC 25618 / H37Rv).